The primary structure comprises 533 residues: Acid-sensing ion channel 3 (533 aa).

Over 1–19 the chain is Cytoplasmic; it reads MKPRSGLEEAQRRQASDIR. Residues 20 to 40 form a helical membrane-spanning segment; that stretch reads VFASSCTMHGLGHIFGPGGLT. T40 is subject to Phosphothreonine; by PKC. The Extracellular segment spans residues 41–435; that stretch reads LRRGLWATAV…EQKAAYEVSE (395 aa). 7 disulfide bridges follow: C93–C187, C165–C172, C283–C372, C317–C368, C321–C366, C330–C352, and C332–C344. N176 carries N-linked (GlcNAc...) asparagine glycosylation. The disordered stretch occupies residues 286–310; it reads ASLDPDDFDPEPSDPLGSPRPRPSP. The N-linked (GlcNAc...) asparagine glycan is linked to N400. A helical transmembrane segment spans residues 436–456; the sequence is LLGDIGGQMGLFIGASLLTIL. A GAS motif; ion selectivity filter motif is present at residues 449 to 451; that stretch reads GAS. Over 457–533 the chain is Cytoplasmic; that stretch reads EILDYLCEVF…HRTCYLVTRL (77 aa). A Phosphoserine; by PKC modification is found at S523. The short motif at 530–533 is the PDZ-binding element; it reads VTRL.

This sequence belongs to the amiloride-sensitive sodium channel (TC 1.A.6) family. ASIC3 subfamily. Can form homotrimeric channels. Heterotrimer; forms functional heterotrimers producing channel with different properties. Forms heterotrimers with ASIC2; gives rise to a biphasic current with a sustained current which discriminates poorly between Na(+) and K(+). Interacts with STOM; inhibits ASIC3 acid-evoked current. Interacts with LIN7B (via PDZ domain); increases ASIC3 expression at the plasma membrane. Interacts with MAGI1 (via PDZ domain); probably regulates ASIC3. Interacts with GOPC (via PDZ domain); probably regulates ASIC3. Interacts with DLG4 (via PDZ domain); reduces ASIC3 expression at the plasma membrane. Could be phosphorylated by PKC, promoting activation of ASIC2/ASIC3 heterotrimers. Expressed in sciatic nerve and dorsal root ganglion (at protein level). Expressed in sensory neurons of dorsal root ganglion. Expressed in Golgi interneurons in the granular layer. Also found in superior cervical ganglia, spinal cord and brain stem.

The protein localises to the cell membrane. The protein resides in the cytoplasm. The catalysed reaction is Na(+)(in) = Na(+)(out). It carries out the reaction K(+)(in) = K(+)(out). It catalyses the reaction Ca(2+)(in) = Ca(2+)(out). Inhibited by the diuretic drug amiloride. Inhibited by gadolinium ions. Inhibited by extracellular Ca(2+). Activated by lactate. Salicylic acid, diclofenac and aspirin inhibit the sustained current component. Activated by the vertebrate neuropeptides NPFF and NPSF, and the related FMRFamide. Specifically and reversibly inhibited by the a sea anemone toxin APETx2. ASIC3-containing channels are potentiated by the cono-RFamide CNF-Tx1.1, and probably CNF-Tx1.2 and CNF-Tx1.3 (AC P0DL71). Its function is as follows. Forms pH-gated heterotrimeric sodium channels that act as postsynaptic excitatory receptors in the nervous system. Upon extracellular acidification, these channels generate a biphasic current with a fast inactivating and a slow sustained phase. ASIC3 is more sensitive to protons and gates between closed, open, and desensitized states faster than other ASICs. Displays high selectivity for sodium ions but can also permit the permeation of other cations. As a neuronal acid sensor, probably contributes to mechanoreception, acid nociception, and heat nociception. By forming heterotrimeric channels with ASIC2, generates a biphasic current with a fast inactivating and a slow sustained phase, which in sensory neurons is proposed to mediate the pain induced by acidosis that occurs in ischemic, damaged or inflamed tissues. This is Acid-sensing ion channel 3 from Rattus norvegicus (Rat).